Reading from the N-terminus, the 39-residue chain is Anthranilate phosphoribosyltransferase (39 aa).

Belongs to the anthranilate phosphoribosyltransferase family. In terms of assembly, homodimer.

The catalysed reaction is N-(5-phospho-beta-D-ribosyl)anthranilate + diphosphate = 5-phospho-alpha-D-ribose 1-diphosphate + anthranilate. The protein operates within amino-acid biosynthesis; L-tryptophan biosynthesis; L-tryptophan from chorismate: step 2/5. Its function is as follows. Catalyzes the transfer of the phosphoribosyl group of 5-phosphorylribose-1-pyrophosphate (PRPP) to anthranilate to yield N-(5'-phosphoribosyl)-anthranilate (PRA). In Pectobacterium carotovorum (Erwinia carotovora), this protein is Anthranilate phosphoribosyltransferase (trpD).